The chain runs to 110 residues: Small ribosomal subunit protein bS16 (110 aa).

Positions 82 to 103 (VKKREARNNPEKAVPRKERKAQ) are enriched in basic and acidic residues. Positions 82-110 (VKKREARNNPEKAVPRKERKAQAEAAAKG) are disordered.

It belongs to the bacterial ribosomal protein bS16 family.

This is Small ribosomal subunit protein bS16 from Bradyrhizobium sp. (strain ORS 278).